The primary structure comprises 373 residues: MFSKSLEALHHAKRYRKRELFDPLLKDYASNDYLGLSVKKDLLQNAFNKLQSFVSHSPKASMLVNGYHPLHAELEERLANLLGFESALLVGSGFLGNLALIDTLLVKNALLFMDAHYHASGIFSTKIKPNQVIFFSHNDIKDLKQKLFNAPKNKIKFIAIEGVYSMDASVAPYDFYAIIQEIPNAFLIVDEAHSFGTIGENLLGFLEYYRIKEKDKIIKLSTFSKALASYGACILAPLQTIEFLTNRAKSVIYTTALSLLDTALTLAHLEYFIVQKQELKNELSKHQQIIFETLGIRTLAGFFTLEFESNPALLNAHHFLKEKGFLVGAIRPPTVSKPLLRVSLSLKNSLEDTKELANTLLNYSKIQSSFKSG.

Residue Arg16 coordinates substrate. Position 93-94 (93-94 (GF)) interacts with pyridoxal 5'-phosphate. His118 contacts substrate. Residues Ser165, 190-193 (DEAH), and 222-225 (TFSK) contribute to the pyridoxal 5'-phosphate site. The residue at position 225 (Lys225) is an N6-(pyridoxal phosphate)lysine. Thr334 is a binding site for substrate.

It belongs to the class-II pyridoxal-phosphate-dependent aminotransferase family. BioF subfamily. As to quaternary structure, homodimer. The cofactor is pyridoxal 5'-phosphate.

The enzyme catalyses 6-carboxyhexanoyl-[ACP] + L-alanine + H(+) = (8S)-8-amino-7-oxononanoate + holo-[ACP] + CO2. It functions in the pathway cofactor biosynthesis; biotin biosynthesis. Its function is as follows. Catalyzes the decarboxylative condensation of pimeloyl-[acyl-carrier protein] and L-alanine to produce 8-amino-7-oxononanoate (AON), [acyl-carrier protein], and carbon dioxide. The protein is 8-amino-7-oxononanoate synthase of Helicobacter pylori (strain ATCC 700392 / 26695) (Campylobacter pylori).